The primary structure comprises 541 residues: Apolipoprotein N-acyltransferase (541 aa).

A run of 6 helical transmembrane segments spans residues 21–41, 54–74, 82–102, 116–136, 157–177, and 189–209; these read LSGF…WYSL, LFVS…SWML, LIYL…SGFS, FLWS…YGIF, FGGF…NMSF, and MLWV…YEYL. The CN hydrolase domain occupies 220–499; the sequence is LRVAVVQPAH…SGVLETSLPL (280 aa). E264 acts as the Proton acceptor in catalysis. K349 is a catalytic residue. C404 (nucleophile) is an active-site residue. The helical transmembrane segment at 512 to 532 threads the bilayer; it reads YPMILIAFCAVSYLGGGFLGY.

The protein belongs to the CN hydrolase family. Apolipoprotein N-acyltransferase subfamily.

The protein localises to the cell inner membrane. It catalyses the reaction N-terminal S-1,2-diacyl-sn-glyceryl-L-cysteinyl-[lipoprotein] + a glycerophospholipid = N-acyl-S-1,2-diacyl-sn-glyceryl-L-cysteinyl-[lipoprotein] + a 2-acyl-sn-glycero-3-phospholipid + H(+). Its pathway is protein modification; lipoprotein biosynthesis (N-acyl transfer). In terms of biological role, catalyzes the phospholipid dependent N-acylation of the N-terminal cysteine of apolipoprotein, the last step in lipoprotein maturation. The sequence is that of Apolipoprotein N-acyltransferase from Chlamydia pneumoniae (Chlamydophila pneumoniae).